We begin with the raw amino-acid sequence, 147 residues long: Protein archease (147 aa).

3 residues coordinate Ca(2+): Asp-17, Asp-146, and Ile-147.

The protein belongs to the archease family.

Its function is as follows. Activates the tRNA-splicing ligase complex by facilitating the enzymatic turnover of catalytic subunit RtcB. Acts by promoting the guanylylation of RtcB, a key intermediate step in tRNA ligation. Can also alter the NTP specificity of RtcB such that ATP, dGTP or ITP is used efficiently. This Pyrobaculum neutrophilum (strain DSM 2338 / JCM 9278 / NBRC 100436 / V24Sta) (Thermoproteus neutrophilus) protein is Protein archease.